Reading from the N-terminus, the 115-residue chain is UPF0102 protein NMCC_2054 (115 aa).

Belongs to the UPF0102 family.

The protein is UPF0102 protein NMCC_2054 of Neisseria meningitidis serogroup C (strain 053442).